A 307-amino-acid polypeptide reads, in one-letter code: Leucine-rich repeat-containing protein 59 (307 aa).

M1 is subject to N-acetylmethionine. At T2 the chain carries N-acetylthreonine; in Leucine-rich repeat-containing protein 59, N-terminally processed. The Cytoplasmic portion of the chain corresponds to 2 to 244 (TKAGSKGGNL…KPPPRKHTRS (243 aa)). LRR repeat units follow at residues 10–31 (NLRD…NEVP), 40–62 (KATV…CGLT), 63–84 (HLVK…FGRL), 86–107 (NLQH…FAQL), and 109–128 (NLKW…AKVA). 2 positions are modified to phosphoserine: S23 and S25. At K73 the chain carries N6-succinyllysine. K135 is subject to N6-acetyllysine. A coiled-coil region spans residues 148-216 (MKAVQADQER…KASKREQEKK (69 aa)). The interval 150-241 (AVQADQERER…RPRKPPPRKH (92 aa)) is disordered. The segment covering 154–221 (DQERERQRRL…EQEKKPKKEA (68 aa)) has biased composition (basic and acidic residues). The segment covering 229 to 241 (SGSRPRKPPPRKH) has biased composition (basic residues). Residues 245–265 (WAVLKVLLLLLLLCVAGGLVV) form a helical membrane-spanning segment. Topologically, residues 266–307 (CRVTGLHQQPLCTSVNTIYDNAVQGLRHHEILQWVLQTDSQQ) are lumenal.

Can form homodimers. Interacts with SGO1. Interacts with FGF1.

Its subcellular location is the microsome membrane. The protein localises to the endoplasmic reticulum membrane. It is found in the nucleus envelope. Required for nuclear import of FGF1, but not that of FGF2. Might regulate nuclear import of exogenous FGF1 by facilitating interaction with the nuclear import machinery and by transporting cytosolic FGF1 to, and possibly through, the nuclear pores. In Mus musculus (Mouse), this protein is Leucine-rich repeat-containing protein 59 (Lrrc59).